The primary structure comprises 299 residues: Leucine zipper transcription factor-like protein 1 (299 aa).

Residues 88–296 (LAQAEKWYLK…DLRKRLAQYE (209 aa)) adopt a coiled-coil conformation. The interval 145 to 299 (GTAELLNKEI…KRLAQYEPED (155 aa)) is interaction with BSS9.

It belongs to the LZTFL1 family. Self-associates. Interacts with BBS9; the interaction mediates the association of LZTL1 with the BBsome complex and regulates BBSome ciliary trafficking.

The protein localises to the cytoplasm. In terms of biological role, regulates ciliary localization of the BBSome complex. Together with the BBSome complex, controls SMO ciliary trafficking and contributes to the sonic hedgehog (SHH) pathway regulation. May play a role in neurite outgrowth. May have tumor suppressor function. The protein is Leucine zipper transcription factor-like protein 1 (LZTFL1) of Macaca fascicularis (Crab-eating macaque).